Consider the following 309-residue polypeptide: Glutaminase (309 aa).

Serine 64, asparagine 114, glutamate 160, asparagine 167, tyrosine 191, tyrosine 243, and valine 261 together coordinate substrate.

It belongs to the glutaminase family. Homotetramer.

The catalysed reaction is L-glutamine + H2O = L-glutamate + NH4(+). The sequence is that of Glutaminase from Methylorubrum extorquens (strain PA1) (Methylobacterium extorquens).